A 248-amino-acid chain; its full sequence is Probable transcriptional regulatory protein PHZ_c3068 (248 aa).

Belongs to the TACO1 family.

The protein resides in the cytoplasm. This chain is Probable transcriptional regulatory protein PHZ_c3068, found in Phenylobacterium zucineum (strain HLK1).